The chain runs to 99 residues: Aspartyl/glutamyl-tRNA(Asn/Gln) amidotransferase subunit C (99 aa).

It belongs to the GatC family. Heterotrimer of A, B and C subunits.

The enzyme catalyses L-glutamyl-tRNA(Gln) + L-glutamine + ATP + H2O = L-glutaminyl-tRNA(Gln) + L-glutamate + ADP + phosphate + H(+). It carries out the reaction L-aspartyl-tRNA(Asn) + L-glutamine + ATP + H2O = L-asparaginyl-tRNA(Asn) + L-glutamate + ADP + phosphate + 2 H(+). In terms of biological role, allows the formation of correctly charged Asn-tRNA(Asn) or Gln-tRNA(Gln) through the transamidation of misacylated Asp-tRNA(Asn) or Glu-tRNA(Gln) in organisms which lack either or both of asparaginyl-tRNA or glutaminyl-tRNA synthetases. The reaction takes place in the presence of glutamine and ATP through an activated phospho-Asp-tRNA(Asn) or phospho-Glu-tRNA(Gln). The sequence is that of Aspartyl/glutamyl-tRNA(Asn/Gln) amidotransferase subunit C from Burkholderia thailandensis (strain ATCC 700388 / DSM 13276 / CCUG 48851 / CIP 106301 / E264).